The primary structure comprises 230 residues: Alpha-S1-casein (230 aa).

Positions 1 to 15 are cleaved as a signal peptide; sequence MKLLILTCLVAVALA. 6 positions are modified to phosphoserine: S33, S83, S85, S86, S87, and S88. Over residues 60–83 the composition is skewed to basic and acidic residues; it reads DELKDTRNEPTEDHIMEDTERKES. Disordered stretches follow at residues 60–103 and 211–230; these read DELK…DILK and TPEG…PQWW. Over residues 84–96 the composition is skewed to low complexity; sequence GSSSSEEVVSSTT.

Belongs to the alpha-casein family. Mammary gland specific. Secreted in milk.

It is found in the secreted. Important role in the capacity of milk to transport calcium phosphate. In Camelus dromedarius (Dromedary), this protein is Alpha-S1-casein (CSN1S1).